The following is a 129-amino-acid chain: Histone H3-like centromeric protein A (129 aa).

Positions 1–14 are enriched in basic residues; it reads MGPRRKPRTPRRRP. The tract at residues 1–30 is disordered; sequence MGPRRKPRTPRRRPSSPVPGPSRRSSRPGK. Glycine 2 is subject to N,N,N-trimethylglycine. Phosphoserine is present on residues serine 16, serine 22, and serine 57. The H3-like stretch occupies residues 30 to 129; it reads KRRKFLWLKE…RIRGIEGGLG (100 aa). Residues 64–105 are CATD; that stretch reads CGKFTRGVDLCWQAQALLALQEAAEAFLVHLFEDAYLLTLHA.

It belongs to the histone H3 family. Component of centromeric nucleosomes, where DNA is wrapped around a histone octamer core. The octamer contains two molecules each of H2A, H2B, CENPA and H4 assembled in one CENPA-H4 heterotetramer and two H2A-H2B heterodimers. CENPA modulates the DNA-binding characteristics of nucleosomes so that protruding DNA ends have higher flexibility than in nucleosomes containing conventional histone H3. Inhibits binding of histone H1 to nucleosomes, since histone H1 binds preferentially to rigid DNA linkers that protrude from nucleosomes. Nucleosomes containing CENPA also contain histone H2A variants such as MACROH2A and H2A.Z/H2AZ1. The CENPA-H4 heterotetramer is more compact and structurally more rigid than corresponding H3-H4 heterotetramers. Can assemble into nucleosomes that contain both CENPA and histone H3.3; these nucleosomes interact with a single CENPC chain. Heterotrimer composed of HJURP, CENPA and histone H4, where HJURP interacts with the dimer formed by CENPA and histone H4 and prevents tetramerization of CENPA and H4. Component of the CENPA-NAC complex, at least composed of CENPA, CENPC, CENPH, CENPM, CENPN, CENPT and CENPU. Interacts (via CATD domain) with HJURP; the interaction is direct and is required for its localization to centromeres. Interacts with CENPC, CENPN and CENPT; interaction is direct. Part of a centromere complex consisting of CENPA, CENPT and CENPW. Identified in centromere complexes containing histones H2A, H2B and H4, and at least CENPA, CENPB, CENPC, CENPT, CENPN, HJURP, SUPT16H, SSRP1 and RSF1. Can self-associate. The CENPA-H4 heterotetramer can bind DNA by itself (in vitro). Interacts with CDK1, PPP1CA and RBBP7. Post-translationally, trimethylated by NTMT1 at the N-terminal glycine after cleavage of Met-1. Methylation is low before incorporation into nucleosomes and increases with cell cycle progression, with the highest levels in mitotic nucleosomes. In terms of processing, phosphorylated by CDK1 at Ser-57 during early mitosis; this abolishes association with chromatin and centromeres, prevents interaction with HJURP and thereby prevents premature assembly of CENPA into centromeres. Dephosphorylated at Ser-57 by PPP1CA during late mitosis. Poly-ADP-ribosylated by PARP1.

The protein localises to the nucleus. It is found in the chromosome. The protein resides in the centromere. Functionally, histone H3-like nucleosomal protein that is specifically found in centromeric nucleosomes. Replaces conventional H3 in the nucleosome core of centromeric chromatin that serves as an assembly site for the inner kinetochore. The presence of CENPA subtly modifies the nucleosome structure and the way DNA is wrapped around the nucleosome and gives rise to protruding DNA ends that are less well-ordered and rigid compared to nucleosomes containing histone H3. May serve as an epigenetic mark that propagates centromere identity through replication and cell division. Required for recruitment and assembly of kinetochore proteins, and as a consequence required for progress through mitosis, chromosome segregation and cytokinesis. This chain is Histone H3-like centromeric protein A (CENPA), found in Cricetulus griseus (Chinese hamster).